The sequence spans 153 residues: Vasotocin-neurophysin VT 1 (153 aa).

An N-terminal signal peptide occupies residues 1–19 (MPQCALLLSLLGLLALSSA). A disulfide bridge links cysteine 20 with cysteine 25. The residue at position 28 (glycine 28) is a Glycine amide. 7 disulfide bridges follow: cysteine 41–cysteine 85, cysteine 44–cysteine 58, cysteine 52–cysteine 75, cysteine 59–cysteine 65, cysteine 92–cysteine 105, cysteine 99–cysteine 117, and cysteine 106–cysteine 111.

Belongs to the vasopressin/oxytocin family. In terms of processing, seven disulfide bonds are present in neurophysin.

The protein localises to the secreted. Its function is as follows. Vasotocin is probably an antidiuretic hormone. The polypeptide is Vasotocin-neurophysin VT 1 (Takifugu rubripes (Japanese pufferfish)).